The primary structure comprises 238 residues: MPDEKLPQYNEVWNDLEKGCLHSCPSYSVNNHVNNPIVKQNSTLTQPSLRKKNTMAAPARLRKRSENVRLTQARYAIFHIFLPFILTLLLYHNFYNYFDQALADLNSVVKYVIETIVLIFTYVMTVIIVYFSFSLIKLAFEEAYVYAPSVAKANEGLAKAIAGLAKYVAKAIQGLAHIILSLLLFILGLEVIEQDEETGDVEMSSMRGQAITTEPASDNTMAEETDCNTSKDVESGSN.

Transmembrane regions (helical) follow at residues 75 to 95, 116 to 136, and 172 to 192; these read YAIF…HNFY, IVLI…FSLI, and IQGL…LEVI. The tract at residues 200 to 238 is disordered; it reads DVEMSSMRGQAITTEPASDNTMAEETDCNTSKDVESGSN. Polar residues predominate over residues 206–220; sequence MRGQAITTEPASDNT. A compositionally biased stretch (basic and acidic residues) spans 229–238; the sequence is TSKDVESGSN.

It is found in the membrane. This is an uncharacterized protein from Schizosaccharomyces pombe (strain 972 / ATCC 24843) (Fission yeast).